A 295-amino-acid chain; its full sequence is 33 kDa chaperonin (295 aa).

2 cysteine pairs are disulfide-bonded: C236–C238 and C269–C272.

The protein belongs to the HSP33 family. Post-translationally, under oxidizing conditions two disulfide bonds are formed involving the reactive cysteines. Under reducing conditions zinc is bound to the reactive cysteines and the protein is inactive.

Its subcellular location is the cytoplasm. Redox regulated molecular chaperone. Protects both thermally unfolding and oxidatively damaged proteins from irreversible aggregation. Plays an important role in the bacterial defense system toward oxidative stress. The polypeptide is 33 kDa chaperonin (Citrifermentans bemidjiense (strain ATCC BAA-1014 / DSM 16622 / JCM 12645 / Bem) (Geobacter bemidjiensis)).